Consider the following 305-residue polypeptide: Acetyl-coenzyme A carboxylase carboxyl transferase subunit beta (305 aa).

One can recognise a CoA carboxyltransferase N-terminal domain in the interval 29–298; sequence LWTKCESCDA…EMKLPLLESS (270 aa). Positions 33, 36, 52, and 55 each coordinate Zn(2+). The C4-type zinc-finger motif lies at 33-55; sequence CESCDALTYTKDLQANLMVCLQC.

The protein belongs to the AccD/PCCB family. Acetyl-CoA carboxylase is a heterohexamer composed of biotin carboxyl carrier protein (AccB), biotin carboxylase (AccC) and two subunits each of ACCase subunit alpha (AccA) and ACCase subunit beta (AccD). Requires Zn(2+) as cofactor.

The protein resides in the cytoplasm. It catalyses the reaction N(6)-carboxybiotinyl-L-lysyl-[protein] + acetyl-CoA = N(6)-biotinyl-L-lysyl-[protein] + malonyl-CoA. The protein operates within lipid metabolism; malonyl-CoA biosynthesis; malonyl-CoA from acetyl-CoA: step 1/1. Its function is as follows. Component of the acetyl coenzyme A carboxylase (ACC) complex. Biotin carboxylase (BC) catalyzes the carboxylation of biotin on its carrier protein (BCCP) and then the CO(2) group is transferred by the transcarboxylase to acetyl-CoA to form malonyl-CoA. This chain is Acetyl-coenzyme A carboxylase carboxyl transferase subunit beta, found in Synechococcus sp. (strain ATCC 27144 / PCC 6301 / SAUG 1402/1) (Anacystis nidulans).